A 276-amino-acid polypeptide reads, in one-letter code: NADPH-dependent 7-cyano-7-deazaguanine reductase (276 aa).

Residue 83 to 85 (IES) participates in substrate binding. 85 to 86 (SK) lines the NADPH pocket. Cys184 functions as the Thioimide intermediate in the catalytic mechanism. The active-site Proton donor is the Asp191. 223 to 224 (HE) is a binding site for substrate. An NADPH-binding site is contributed by 252–253 (RG).

The protein belongs to the GTP cyclohydrolase I family. QueF type 2 subfamily. Homodimer.

It localises to the cytoplasm. It carries out the reaction 7-aminomethyl-7-carbaguanine + 2 NADP(+) = 7-cyano-7-deazaguanine + 2 NADPH + 3 H(+). It functions in the pathway tRNA modification; tRNA-queuosine biosynthesis. Its function is as follows. Catalyzes the NADPH-dependent reduction of 7-cyano-7-deazaguanine (preQ0) to 7-aminomethyl-7-deazaguanine (preQ1). This is NADPH-dependent 7-cyano-7-deazaguanine reductase from Pseudomonas fluorescens (strain SBW25).